A 162-amino-acid polypeptide reads, in one-letter code: NADH-quinone oxidoreductase subunit I 2 (162 aa).

4Fe-4S ferredoxin-type domains are found at residues 53-83 and 93-122; these read LRRY…IESE and TRYD…ETRI. [4Fe-4S] cluster-binding residues include C63, C66, C69, C73, C102, C105, C108, and C112.

Belongs to the complex I 23 kDa subunit family. In terms of assembly, NDH-1 is composed of 14 different subunits. Subunits NuoA, H, J, K, L, M, N constitute the membrane sector of the complex. The cofactor is [4Fe-4S] cluster.

It is found in the cell inner membrane. It catalyses the reaction a quinone + NADH + 5 H(+)(in) = a quinol + NAD(+) + 4 H(+)(out). Functionally, NDH-1 shuttles electrons from NADH, via FMN and iron-sulfur (Fe-S) centers, to quinones in the respiratory chain. The immediate electron acceptor for the enzyme in this species is believed to be ubiquinone. Couples the redox reaction to proton translocation (for every two electrons transferred, four hydrogen ions are translocated across the cytoplasmic membrane), and thus conserves the redox energy in a proton gradient. In Nitrosospira multiformis (strain ATCC 25196 / NCIMB 11849 / C 71), this protein is NADH-quinone oxidoreductase subunit I 2.